The chain runs to 206 residues: MSYTLPSLPYAYDALEPHFDKQTMEIHHTKHHQTYVNNANAALESLPEFANLPVEELITKLDQLPADKKTVLRNNAGGHANHSLFWKGLKKGTTLQGDLKAAIERDFGSVDNFKAEFEKAAASRFGSGWAWLVLKGDKLAVVSTANQDSPLMGEAISGASGFPIMGLDVWEHAYYLKFQNRRPDYIKEFWNVVNWDEAAARFAAKK.

Mn(2+) is bound by residues His27, His82, Asp168, and His172.

The protein belongs to the iron/manganese superoxide dismutase family. In terms of assembly, homodimer. Requires Mn(2+) as cofactor.

It catalyses the reaction 2 superoxide + 2 H(+) = H2O2 + O2. Its function is as follows. Destroys superoxide anion radicals which are normally produced within the cells and which are toxic to biological systems. This is Superoxide dismutase [Mn] (sodA) from Escherichia coli (strain K12).